A 328-amino-acid polypeptide reads, in one-letter code: Methionyl-tRNA formyltransferase (328 aa).

Residue serine 121–proline 124 coordinates (6S)-5,6,7,8-tetrahydrofolate.

This sequence belongs to the Fmt family.

The catalysed reaction is L-methionyl-tRNA(fMet) + (6R)-10-formyltetrahydrofolate = N-formyl-L-methionyl-tRNA(fMet) + (6S)-5,6,7,8-tetrahydrofolate + H(+). In terms of biological role, attaches a formyl group to the free amino group of methionyl-tRNA(fMet). The formyl group appears to play a dual role in the initiator identity of N-formylmethionyl-tRNA by promoting its recognition by IF2 and preventing the misappropriation of this tRNA by the elongation apparatus. In Paraburkholderia phytofirmans (strain DSM 17436 / LMG 22146 / PsJN) (Burkholderia phytofirmans), this protein is Methionyl-tRNA formyltransferase.